Here is a 154-residue protein sequence, read N- to C-terminus: Nuclear cap-binding protein subunit 2 (154 aa).

Residues Tyr-10, Tyr-33, 102–106, 113–117, and 123–124 contribute to the mRNA site; these read RVDWD, RQYGR, and QV. The RRM domain maps to 30-108; the sequence is CTLYVGNLSF…RLIRVDWDAG (79 aa).

It belongs to the RRM NCBP2 family. Component of the nuclear cap-binding complex (CBC), a heterodimer composed of Cbp80 and Cbp20 that interacts with m7GpppG-capped RNA. Interacts with Ars2.

The protein localises to the nucleus. Functionally, component of the cap-binding complex (CBC), which binds co-transcriptionally to the 5' cap of pre-mRNAs and is involved in various processes such as pre-mRNA splicing and RNA-mediated gene silencing (RNAi). The CBC complex is involved in miRNA-mediated RNA interference via its interaction with Ars2 and is required for primary microRNAs (miRNAs) processing. Also involved in innate immunity via the short interfering RNAs (siRNAs) processing machinery by restricting the viral RNA production. In the CBC complex, Cbp20 recognizes and binds capped RNAs (m7GpppG-capped RNA) but requires Cbp80 to stabilize the movement of its N-terminal loop and lock the CBC into a high affinity cap-binding state with the cap structure. In Drosophila melanogaster (Fruit fly), this protein is Nuclear cap-binding protein subunit 2 (Cbp20).